A 130-amino-acid chain; its full sequence is Small ribosomal subunit protein uS9 (130 aa).

Positions 101-110 (AGFLTRDPRM) are enriched in basic and acidic residues. A disordered region spans residues 101 to 130 (AGFLTRDPRMKERKKYGLKKARRAPQFSKR). Residues 111-130 (KERKKYGLKKARRAPQFSKR) show a composition bias toward basic residues.

The protein belongs to the universal ribosomal protein uS9 family.

The chain is Small ribosomal subunit protein uS9 from Clostridium tetani (strain Massachusetts / E88).